The primary structure comprises 457 residues: Phosphoglucosamine mutase (457 aa).

The active-site Phosphoserine intermediate is Ser103. Residues Ser103, Asp245, Asp247, and Asp249 each coordinate Mg(2+). Phosphoserine is present on Ser103.

The protein belongs to the phosphohexose mutase family. The cofactor is Mg(2+). Post-translationally, activated by phosphorylation.

The catalysed reaction is alpha-D-glucosamine 1-phosphate = D-glucosamine 6-phosphate. Catalyzes the conversion of glucosamine-6-phosphate to glucosamine-1-phosphate. The protein is Phosphoglucosamine mutase of Syntrophotalea carbinolica (strain DSM 2380 / NBRC 103641 / GraBd1) (Pelobacter carbinolicus).